An 852-amino-acid polypeptide reads, in one-letter code: Envelope glycoprotein gp160 (852 aa).

Positions 1–32 (MRVKGIKKNYQHLWRWGGMMLLGILMICSATD) are cleaved as a signal peptide. Over 33 to 680 (KLWVTVYYGV…ITNWLWYIKI (648 aa)) the chain is Extracellular. N-linked (GlcNAc...) asparagine; by host glycosylation is present at asparagine 49. Cysteines 54 and 74 form a disulfide. Residues asparagine 88, asparagine 135, asparagine 138, asparagine 154, asparagine 158, asparagine 197, asparagine 234, asparagine 241, asparagine 262, asparagine 276, asparagine 289, asparagine 295, asparagine 301, asparagine 331, asparagine 354, and asparagine 360 are each glycosylated (N-linked (GlcNAc...) asparagine; by host). Cystine bridges form between cysteine 119/cysteine 205, cysteine 126/cysteine 196, cysteine 131/cysteine 155, cysteine 218/cysteine 247, and cysteine 228/cysteine 239. The tract at residues 131–154 (CHDFNATNATSNSGKMMEGGEMKN) is V1. Positions 155-196 (CSFNITTSIRDKMQKEYALFYKLDIVPIDNDKTNTRYRLISC) are V2. The V3 stretch occupies residues 296–329 (CTRPNNNTRKRITMGPGRVYYTTGQIIGDIRRAH). A disulfide bond links cysteine 296 and cysteine 330. A CD4-binding loop region spans residues 362-372 (SSGGDPEIVMH). Cystine bridges form between cysteine 376/cysteine 439 and cysteine 383/cysteine 412. A V4 region spans residues 383 to 412 (CNTTQLFNSTWYRNTTGNITEGNSPITLPC). Asparagine 384, asparagine 390, asparagine 396, asparagine 400, asparagine 442, and asparagine 456 each carry an N-linked (GlcNAc...) asparagine; by host glycan. V5 stretches follow at residues 454–467 (NNNE…FRPG) and 457–467 (ETTDTEIFRPG). Residues 508 to 528 (AVGLGALFLGFLGAAGSTMGA) form a fusion peptide region. The tract at residues 570 to 588 (KQLQARVLAVERYLKDQQL) is immunosuppression. Cysteine 594 and cysteine 600 are oxidised to a cystine. 5 N-linked (GlcNAc...) asparagine; by host glycosylation sites follow: asparagine 607, asparagine 612, asparagine 621, asparagine 633, and asparagine 670. A coiled-coil region spans residues 629–663 (REIDNYTNLIYSLIEDSQIQQEKNEKELLELDKWA). The segment at 658 to 679 (ELDKWASLWNWFNITNWLWYIK) is MPER; binding to GalCer. A helical membrane pass occupies residues 681 to 701 (FIMIVGGLIGLRIVFAVLSIV). At 702-852 (NRVRQGYSPL…IRQGLERALQ (151 aa)) the chain is on the cytoplasmic side. Positions 708-711 (YSPL) match the YXXL motif; contains endocytosis signal motif. The disordered stretch occupies residues 715 to 741 (TRLPGRRGPDRPEGIEEEGGERDRDRS).

It belongs to the HIV-1 env protein family. In terms of assembly, the mature envelope protein (Env) consists of a homotrimer of non-covalently associated gp120-gp41 heterodimers. The resulting complex protrudes from the virus surface as a spike. There seems to be as few as 10 spikes on the average virion. Interacts with host CD4, CCR5 and CXCR4. Gp120 also interacts with the C-type lectins CD209/DC-SIGN and CLEC4M/DC-SIGNR (collectively referred to as DC-SIGN(R)). Gp120 and gp41 interact with GalCer. Gp120 interacts with host ITGA4/ITGB7 complex; on CD4+ T-cells, this interaction results in rapid activation of integrin ITGAL/LFA-1, which facilitates efficient cell-to-cell spreading of HIV-1. Gp120 interacts with cell-associated heparan sulfate; this interaction increases virus infectivity on permissive cells and may be involved in infection of CD4- cells. As to quaternary structure, the mature envelope protein (Env) consists of a homotrimer of non-covalently associated gp120-gp41 heterodimers. The resulting complex protrudes from the virus surface as a spike. There seems to be as few as 10 spikes on the average virion. In terms of processing, highly glycosylated by host. The high number of glycan on the protein is reffered to as 'glycan shield' because it contributes to hide protein sequence from adaptive immune system. Palmitoylation of the transmembrane protein and of Env polyprotein (prior to its proteolytic cleavage) is essential for their association with host cell membrane lipid rafts. Palmitoylation is therefore required for envelope trafficking to classical lipid rafts, but not for viral replication. Post-translationally, specific enzymatic cleavages in vivo yield mature proteins. Envelope glycoproteins are synthesized as an inactive precursor that is heavily N-glycosylated and processed likely by host cell furin in the Golgi to yield the mature SU and TM proteins. The cleavage site between SU and TM requires the minimal sequence [KR]-X-[KR]-R. About 2 of the 9 disulfide bonds of gp41 are reduced by P4HB/PDI, following binding to CD4 receptor.

Its subcellular location is the virion membrane. It is found in the host cell membrane. The protein resides in the host endosome membrane. Oligomerizes in the host endoplasmic reticulum into predominantly trimers. In a second time, gp160 transits in the host Golgi, where glycosylation is completed. The precursor is then proteolytically cleaved in the trans-Golgi and thereby activated by cellular furin or furin-like proteases to produce gp120 and gp41. In terms of biological role, attaches the virus to the host lymphoid cell by binding to the primary receptor CD4. This interaction induces a structural rearrangement creating a high affinity binding site for a chemokine coreceptor like CXCR4 and/or CCR5. Acts as a ligand for CD209/DC-SIGN and CLEC4M/DC-SIGNR, which are respectively found on dendritic cells (DCs), and on endothelial cells of liver sinusoids and lymph node sinuses. These interactions allow capture of viral particles at mucosal surfaces by these cells and subsequent transmission to permissive cells. HIV subverts the migration properties of dendritic cells to gain access to CD4+ T-cells in lymph nodes. Virus transmission to permissive T-cells occurs either in trans (without DCs infection, through viral capture and transmission), or in cis (following DCs productive infection, through the usual CD4-gp120 interaction), thereby inducing a robust infection. In trans infection, bound virions remain infectious over days and it is proposed that they are not degraded, but protected in non-lysosomal acidic organelles within the DCs close to the cell membrane thus contributing to the viral infectious potential during DCs' migration from the periphery to the lymphoid tissues. On arrival at lymphoid tissues, intact virions recycle back to DCs' cell surface allowing virus transmission to CD4+ T-cells. Its function is as follows. Acts as a class I viral fusion protein. Under the current model, the protein has at least 3 conformational states: pre-fusion native state, pre-hairpin intermediate state, and post-fusion hairpin state. During fusion of viral and target intracellular membranes, the coiled coil regions (heptad repeats) assume a trimer-of-hairpins structure, positioning the fusion peptide in close proximity to the C-terminal region of the ectodomain. The formation of this structure appears to drive apposition and subsequent fusion of viral and target cell membranes. Complete fusion occurs in host cell endosomes and is dynamin-dependent, however some lipid transfer might occur at the plasma membrane. The virus undergoes clathrin-dependent internalization long before endosomal fusion, thus minimizing the surface exposure of conserved viral epitopes during fusion and reducing the efficacy of inhibitors targeting these epitopes. Membranes fusion leads to delivery of the nucleocapsid into the cytoplasm. The polypeptide is Envelope glycoprotein gp160 (Human immunodeficiency virus type 1 group M subtype B (isolate BRVA) (HIV-1)).